A 339-amino-acid polypeptide reads, in one-letter code: 1-aminocyclopropane-1-carboxylate deaminase (339 aa).

Position 52 is an N6-(pyridoxal phosphate)lysine (K52). Residue S79 is the Nucleophile of the active site.

This sequence belongs to the ACC deaminase/D-cysteine desulfhydrase family. Homotrimer. The cofactor is pyridoxal 5'-phosphate.

It catalyses the reaction 1-aminocyclopropane-1-carboxylate + H2O = 2-oxobutanoate + NH4(+). Functionally, catalyzes a cyclopropane ring-opening reaction, the irreversible conversion of 1-aminocyclopropane-1-carboxylate (ACC) to ammonia and alpha-ketobutyrate. Allows growth on ACC as a nitrogen source. The polypeptide is 1-aminocyclopropane-1-carboxylate deaminase (Rhizobium leguminosarum bv. viciae).